The sequence spans 544 residues: Bacillolysin (544 aa).

The signal sequence occupies residues 1-25 (MNKRAMLGAIGLAFGLMAWPFGASA). A propeptide spans 26–225 (KGKSMVWNEQ…DEAKPGGAQP (200 aa)) (activation peptide). The Ca(2+) site is built by D285, D287, Q289, and D366. H370 contacts Zn(2+). E371 is a catalytic residue. Positions 374 and 394 each coordinate Zn(2+). Residues E405, N411, D413, E415, E418, Y421, T422, V425, and D428 each contribute to the Ca(2+) site. The Proton donor role is filled by H459.

This sequence belongs to the peptidase M4 family. Ca(2+) is required as a cofactor. Requires Zn(2+) as cofactor.

It localises to the secreted. It carries out the reaction Similar, but not identical, to that of thermolysin.. Extracellular zinc metalloprotease. The polypeptide is Bacillolysin (npr) (Bacillus caldolyticus).